The sequence spans 82 residues: ATP synthase subunit c, chloroplastic (82 aa).

The next 2 membrane-spanning stretches (helical) occupy residues 4–24 (IISA…AIGP) and 57–77 (LAFM…LLFA).

Belongs to the ATPase C chain family. F-type ATPases have 2 components, F(1) - the catalytic core - and F(0) - the membrane proton channel. F(1) has five subunits: alpha(3), beta(3), gamma(1), delta(1), epsilon(1). F(0) has four main subunits: a(1), b(1), b'(1) and c(10-14). The alpha and beta chains form an alternating ring which encloses part of the gamma chain. F(1) is attached to F(0) by a central stalk formed by the gamma and epsilon chains, while a peripheral stalk is formed by the delta, b and b' chains.

It is found in the plastid. It localises to the chloroplast thylakoid membrane. Functionally, f(1)F(0) ATP synthase produces ATP from ADP in the presence of a proton or sodium gradient. F-type ATPases consist of two structural domains, F(1) containing the extramembraneous catalytic core and F(0) containing the membrane proton channel, linked together by a central stalk and a peripheral stalk. During catalysis, ATP synthesis in the catalytic domain of F(1) is coupled via a rotary mechanism of the central stalk subunits to proton translocation. Its function is as follows. Key component of the F(0) channel; it plays a direct role in translocation across the membrane. A homomeric c-ring of between 10-14 subunits forms the central stalk rotor element with the F(1) delta and epsilon subunits. The protein is ATP synthase subunit c, chloroplastic of Antithamnion sp. (Red alga).